The following is a 267-amino-acid chain: 5'-nucleotidase SurE (267 aa).

A divalent metal cation is bound by residues Asp-14, Asp-15, Ser-45, and Asn-100.

Belongs to the SurE nucleotidase family. It depends on a divalent metal cation as a cofactor.

The protein localises to the cytoplasm. The catalysed reaction is a ribonucleoside 5'-phosphate + H2O = a ribonucleoside + phosphate. Functionally, nucleotidase that shows phosphatase activity on nucleoside 5'-monophosphates. The polypeptide is 5'-nucleotidase SurE (Methanosarcina barkeri (strain Fusaro / DSM 804)).